The following is a 201-amino-acid chain: Imidazoleglycerol-phosphate dehydratase (201 aa).

Belongs to the imidazoleglycerol-phosphate dehydratase family.

Its subcellular location is the cytoplasm. It catalyses the reaction D-erythro-1-(imidazol-4-yl)glycerol 3-phosphate = 3-(imidazol-4-yl)-2-oxopropyl phosphate + H2O. It functions in the pathway amino-acid biosynthesis; L-histidine biosynthesis; L-histidine from 5-phospho-alpha-D-ribose 1-diphosphate: step 6/9. This chain is Imidazoleglycerol-phosphate dehydratase, found in Prochlorococcus marinus (strain MIT 9301).